Reading from the N-terminus, the 443-residue chain is UDP-N-acetylmuramate--L-alanine ligase (443 aa).

110 to 116 (GAHGKTS) contributes to the ATP binding site.

The protein belongs to the MurCDEF family.

Its subcellular location is the cytoplasm. It carries out the reaction UDP-N-acetyl-alpha-D-muramate + L-alanine + ATP = UDP-N-acetyl-alpha-D-muramoyl-L-alanine + ADP + phosphate + H(+). It functions in the pathway cell wall biogenesis; peptidoglycan biosynthesis. Its function is as follows. Cell wall formation. The sequence is that of UDP-N-acetylmuramate--L-alanine ligase from Streptococcus gordonii (strain Challis / ATCC 35105 / BCRC 15272 / CH1 / DL1 / V288).